A 212-amino-acid polypeptide reads, in one-letter code: LexA repressor (212 aa).

Residues 29-49 constitute a DNA-binding region (H-T-H motif); the sequence is VREIGEAVGLSSSSTIHGHIE. Catalysis depends on for autocatalytic cleavage activity residues serine 133 and lysine 171.

This sequence belongs to the peptidase S24 family. As to quaternary structure, homodimer.

The enzyme catalyses Hydrolysis of Ala-|-Gly bond in repressor LexA.. In terms of biological role, represses a number of genes involved in the response to DNA damage (SOS response), including recA and lexA. In the presence of single-stranded DNA, RecA interacts with LexA causing an autocatalytic cleavage which disrupts the DNA-binding part of LexA, leading to derepression of the SOS regulon and eventually DNA repair. This Leuconostoc mesenteroides subsp. mesenteroides (strain ATCC 8293 / DSM 20343 / BCRC 11652 / CCM 1803 / JCM 6124 / NCDO 523 / NBRC 100496 / NCIMB 8023 / NCTC 12954 / NRRL B-1118 / 37Y) protein is LexA repressor.